The sequence spans 824 residues: Probable receptor-like protein kinase At5g24010 (824 aa).

Positions 1 to 24 (MAFPINLTQTLLFFFCPLLHLSFA) are cleaved as a signal peptide. 5 N-linked (GlcNAc...) asparagine glycosylation sites follow: N6, N41, N204, N227, and N291. Topologically, residues 25 to 406 (AFTPTDNYLI…SSEVVSGKRN (382 aa)) are extracellular. A helical transmembrane segment spans residues 407–427 (VVWIVVGSVLGGFVFLSLFFL). At 428–824 (SVLCLCRRKN…FSQLMTNAGR (397 aa)) the chain is on the cytoplasmic side. Residues 440–467 (TRSSESTGWTPLRRFRGSSNSRTTERTV) are disordered. The span at 456 to 467 (GSSNSRTTERTV) shows a compositional bias: polar residues. One can recognise a Protein kinase domain in the interval 489 to 764 (FDRSLVIGVG…VLWNLEHVLQ (276 aa)). ATP contacts are provided by residues 495-503 (IGVGGFGMV) and K517. D613 acts as the Proton acceptor in catalysis. The segment at 777 to 803 (DYGDVTDPRTARQGLSNGSNIERDYGD) is disordered.

Belongs to the protein kinase superfamily. Ser/Thr protein kinase family.

It is found in the membrane. The chain is Probable receptor-like protein kinase At5g24010 from Arabidopsis thaliana (Mouse-ear cress).